A 200-amino-acid polypeptide reads, in one-letter code: Pyridoxal 5'-phosphate synthase subunit PdxT (200 aa).

52–54 (GES) serves as a coordination point for L-glutamine. Catalysis depends on cysteine 84, which acts as the Nucleophile. L-glutamine is bound by residues arginine 116 and 145 to 146 (IR). Catalysis depends on charge relay system residues histidine 181 and glutamate 183.

The protein belongs to the glutaminase PdxT/SNO family. In the presence of PdxS, forms a dodecamer of heterodimers. Only shows activity in the heterodimer.

It carries out the reaction aldehydo-D-ribose 5-phosphate + D-glyceraldehyde 3-phosphate + L-glutamine = pyridoxal 5'-phosphate + L-glutamate + phosphate + 3 H2O + H(+). It catalyses the reaction L-glutamine + H2O = L-glutamate + NH4(+). Its pathway is cofactor biosynthesis; pyridoxal 5'-phosphate biosynthesis. Catalyzes the hydrolysis of glutamine to glutamate and ammonia as part of the biosynthesis of pyridoxal 5'-phosphate. The resulting ammonia molecule is channeled to the active site of PdxS. The sequence is that of Pyridoxal 5'-phosphate synthase subunit PdxT from Saccharolobus islandicus (strain Y.G.57.14 / Yellowstone #1) (Sulfolobus islandicus).